A 309-amino-acid polypeptide reads, in one-letter code: tRNA dimethylallyltransferase (309 aa).

9 to 16 provides a ligand contact to ATP; that stretch reads GPTAVGKT. 11 to 16 provides a ligand contact to substrate; the sequence is TAVGKT. The interval 34–37 is interaction with substrate tRNA; sequence DSMQ.

It belongs to the IPP transferase family. Monomer. Mg(2+) serves as cofactor.

The catalysed reaction is adenosine(37) in tRNA + dimethylallyl diphosphate = N(6)-dimethylallyladenosine(37) in tRNA + diphosphate. Its function is as follows. Catalyzes the transfer of a dimethylallyl group onto the adenine at position 37 in tRNAs that read codons beginning with uridine, leading to the formation of N6-(dimethylallyl)adenosine (i(6)A). The protein is tRNA dimethylallyltransferase of Enterococcus faecalis (strain ATCC 700802 / V583).